The chain runs to 248 residues: Small ribosomal subunit protein uS3 (248 aa).

The KH type-2 domain maps to isoleucine 39–proline 108. The segment at glutamate 214–glutamate 248 is disordered. Positions arginine 221–alanine 234 are enriched in basic and acidic residues. Residues asparagine 235 to glutamate 248 are compositionally biased toward basic residues.

This sequence belongs to the universal ribosomal protein uS3 family. Part of the 30S ribosomal subunit. Forms a tight complex with proteins S10 and S14.

In terms of biological role, binds the lower part of the 30S subunit head. Binds mRNA in the 70S ribosome, positioning it for translation. The sequence is that of Small ribosomal subunit protein uS3 from Deinococcus deserti (strain DSM 17065 / CIP 109153 / LMG 22923 / VCD115).